We begin with the raw amino-acid sequence, 123 residues long: PTS-dependent dihydroxyacetone kinase, phosphotransferase subunit DhaM (123 aa).

The 122-residue stretch at 2-123 (TYGIVIVSHS…EQLEKMLIEK (122 aa)) folds into the PTS EIIA type-4 domain. Histidine 10 functions as the Tele-phosphohistidine intermediate; for EIIA activity in the catalytic mechanism.

As to quaternary structure, homodimer. The dihydroxyacetone kinase complex is composed of a homodimer of DhaM, a homodimer of DhaK and the subunit DhaL.

The catalysed reaction is dihydroxyacetone + phosphoenolpyruvate = dihydroxyacetone phosphate + pyruvate. It participates in polyol metabolism; glycerol degradation. Functionally, component of the dihydroxyacetone kinase complex, which is responsible for the phosphoenolpyruvate (PEP)-dependent phosphorylation of dihydroxyacetone. DhaM serves as the phosphoryl donor. Is phosphorylated by phosphoenolpyruvate in an EI- and HPr-dependent reaction, and a phosphorelay system on histidine residues finally leads to phosphoryl transfer to DhaL and dihydroxyacetone. The polypeptide is PTS-dependent dihydroxyacetone kinase, phosphotransferase subunit DhaM (Lactococcus lactis subsp. lactis (strain IL1403) (Streptococcus lactis)).